The following is a 138-amino-acid chain: ATP synthase epsilon chain (138 aa).

It belongs to the ATPase epsilon chain family. F-type ATPases have 2 components, CF(1) - the catalytic core - and CF(0) - the membrane proton channel. CF(1) has five subunits: alpha(3), beta(3), gamma(1), delta(1), epsilon(1). CF(0) has three main subunits: a, b and c.

It is found in the cell inner membrane. Produces ATP from ADP in the presence of a proton gradient across the membrane. The protein is ATP synthase epsilon chain of Methylibium petroleiphilum (strain ATCC BAA-1232 / LMG 22953 / PM1).